A 77-amino-acid polypeptide reads, in one-letter code: Conotoxin LiC42 (77 aa).

The N-terminal stretch at 1 to 22 (MKLTCVLIIAVLFLTASQLITA) is a signal peptide. Positions 23–47 (DYSRDKQEYGAERLRDAMGKFKGSR) are excised as a propeptide. 3 disulfide bridges follow: C49/C62, C56/C67, and C61/C76.

This sequence belongs to the conotoxin O1 superfamily. In terms of tissue distribution, expressed by the venom duct.

The protein resides in the secreted. This is Conotoxin LiC42 from Conus lividus (Livid cone).